The primary structure comprises 705 residues: Tryptophan synthase (705 aa).

The interval 1 to 293 (MEAIKKVFEQ…QLTPNAETAK (293 aa)) is tryptophan synthase alpha chain. Catalysis depends on proton acceptor residues glutamate 49 and aspartate 60. Positions 266-287 (KGEPSRVRSPGAAQRTPSQLTP) are disordered. The interval 294 to 705 (GVENILPARF…HVSSNAIPSK (412 aa)) is tryptophan synthase beta chain. Lysine 381 carries the N6-(pyridoxal phosphate)lysine modification.

In the N-terminal section; belongs to the TrpA family. It in the C-terminal section; belongs to the TrpB family. Pyridoxal 5'-phosphate is required as a cofactor.

It carries out the reaction (1S,2R)-1-C-(indol-3-yl)glycerol 3-phosphate + L-serine = D-glyceraldehyde 3-phosphate + L-tryptophan + H2O. Its pathway is amino-acid biosynthesis; L-tryptophan biosynthesis; L-tryptophan from chorismate: step 5/5. The protein is Tryptophan synthase (TRP-1) of Coprinopsis cinerea (Inky cap fungus).